A 316-amino-acid polypeptide reads, in one-letter code: Small ribosomal subunit biogenesis GTPase RsgA (316 aa).

Residues 83–248 (DQYKSKLFAA…LIDSPGFQEF (166 aa)) enclose the CP-type G domain. Residues 131–134 (NKTD) and 185–193 (GQSGMGKST) contribute to the GTP site. Cys272, Cys277, His279, and Cys285 together coordinate Zn(2+).

It belongs to the TRAFAC class YlqF/YawG GTPase family. RsgA subfamily. As to quaternary structure, monomer. Associates with 30S ribosomal subunit, binds 16S rRNA. Zn(2+) serves as cofactor.

It is found in the cytoplasm. Functionally, one of several proteins that assist in the late maturation steps of the functional core of the 30S ribosomal subunit. Helps release RbfA from mature subunits. May play a role in the assembly of ribosomal proteins into the subunit. Circularly permuted GTPase that catalyzes slow GTP hydrolysis, GTPase activity is stimulated by the 30S ribosomal subunit. In Paraburkholderia phytofirmans (strain DSM 17436 / LMG 22146 / PsJN) (Burkholderia phytofirmans), this protein is Small ribosomal subunit biogenesis GTPase RsgA.